Here is a 293-residue protein sequence, read N- to C-terminus: Ribosomal RNA small subunit methyltransferase H (293 aa).

S-adenosyl-L-methionine-binding positions include 32–34, Asp51, Phe78, Asp99, and Gln106; that span reads GGH. Positions 274–293 are disordered; the sequence is DEIRENPASRSAKMRVARRL.

This sequence belongs to the methyltransferase superfamily. RsmH family.

Its subcellular location is the cytoplasm. The enzyme catalyses cytidine(1402) in 16S rRNA + S-adenosyl-L-methionine = N(4)-methylcytidine(1402) in 16S rRNA + S-adenosyl-L-homocysteine + H(+). In terms of biological role, specifically methylates the N4 position of cytidine in position 1402 (C1402) of 16S rRNA. The protein is Ribosomal RNA small subunit methyltransferase H of Sulfurihydrogenibium azorense (strain DSM 15241 / OCM 825 / Az-Fu1).